Here is a 277-residue protein sequence, read N- to C-terminus: tRNA pseudouridine synthase B (277 aa).

D38 acts as the Nucleophile in catalysis.

The protein belongs to the pseudouridine synthase TruB family. Type 1 subfamily.

The catalysed reaction is uridine(55) in tRNA = pseudouridine(55) in tRNA. In terms of biological role, responsible for synthesis of pseudouridine from uracil-55 in the psi GC loop of transfer RNAs. The chain is tRNA pseudouridine synthase B from Sulfurovum sp. (strain NBC37-1).